Here is a 474-residue protein sequence, read N- to C-terminus: tRNA modification GTPase MnmE (474 aa).

Arg28, Glu92, and Arg131 together coordinate (6S)-5-formyl-5,6,7,8-tetrahydrofolate. One can recognise a TrmE-type G domain in the interval 227 to 395 (GIPVAIVGTT…LKGELTQIME (169 aa)). Asn237 serves as a coordination point for K(+). GTP contacts are provided by residues 237–242 (NVGKST), 256–262 (SDIHGTT), 281–284 (DTAG), and 376–378 (SAR). Ser241 contributes to the Mg(2+) binding site. K(+) is bound by residues Ser256, Ile258, and Thr261. Thr262 provides a ligand contact to Mg(2+). Position 474 (Lys474) interacts with (6S)-5-formyl-5,6,7,8-tetrahydrofolate.

Belongs to the TRAFAC class TrmE-Era-EngA-EngB-Septin-like GTPase superfamily. TrmE GTPase family. In terms of assembly, homodimer. Heterotetramer of two MnmE and two MnmG subunits. Requires K(+) as cofactor.

It is found in the cytoplasm. In terms of biological role, exhibits a very high intrinsic GTPase hydrolysis rate. Involved in the addition of a carboxymethylaminomethyl (cmnm) group at the wobble position (U34) of certain tRNAs, forming tRNA-cmnm(5)s(2)U34. This Porphyromonas gingivalis (strain ATCC BAA-308 / W83) protein is tRNA modification GTPase MnmE.